Consider the following 345-residue polypeptide: N-acetyl-gamma-glutamyl-phosphate reductase (345 aa).

The active site involves C149.

This sequence belongs to the NAGSA dehydrogenase family. Type 1 subfamily.

The protein localises to the cytoplasm. The catalysed reaction is N-acetyl-L-glutamate 5-semialdehyde + phosphate + NADP(+) = N-acetyl-L-glutamyl 5-phosphate + NADPH + H(+). It functions in the pathway amino-acid biosynthesis; L-arginine biosynthesis; N(2)-acetyl-L-ornithine from L-glutamate: step 3/4. Catalyzes the NADPH-dependent reduction of N-acetyl-5-glutamyl phosphate to yield N-acetyl-L-glutamate 5-semialdehyde. This Bacillus thuringiensis subsp. konkukian (strain 97-27) protein is N-acetyl-gamma-glutamyl-phosphate reductase.